Reading from the N-terminus, the 34-residue chain is uncharacterized protein (34 aa).

This is an uncharacterized protein from Acidianus two-tailed virus (ATV).